The following is a 227-amino-acid chain: MGAVMGTFSSLQTKQRRPSKDIAWWYYQYQRDKIEDELEMTMVCHRPEGLEQLEAQTNFTKRELQVLYRGFKNECPSGVVNEETFKQIYAQFFPHGDASTYAHYLFNAFDTTQTGSVKFEDFVTALSILLRGTVHEKLRWTFNLYDINKDGYINKEEMMDIVKAIYDMMGKYTYPVLKEDTPRQHVDVFFQKMDKNKDGIVTLDEFLESCQEDDNIMRSLQLFQNVM.

One can recognise an EF-hand 1; degenerate domain in the interval 38–94 (LEMTMVCHRPEGLEQLEAQTNFTKRELQVLYRGFKNECPSGVVNEETFKQIYAQFFP). 3 EF-hand domains span residues 97–132 (DAST…LLRG), 133–168 (TVHE…IYDM), and 181–216 (TPRQ…DDNI). 9 residues coordinate Ca(2+): aspartate 146, asparagine 148, aspartate 150, tyrosine 152, glutamate 157, aspartate 194, asparagine 196, aspartate 198, and glutamate 205. The tract at residues 214 to 227 (DNIMRSLQLFQNVM) is interaction with KCND2.

Belongs to the recoverin family. Component of heteromultimeric potassium channels. Identified in potassium channel complexes containing KCND1, KCND2, KCND3, KCNIP1, KCNIP2, KCNIP3, KCNIP4, DPP6 and DPP10. Part of a heterooctamer composed of the tetrameric channel and four KCNIP1 chains. Probably part of a complex consisting of KCNIP1, KCNIP2 isoform 3 and KCND2. Self-associates to form homodimers and homotetramers. Interacts with KCNIP2 isoform 3 in a calcium-dependent manner. Interacts with KCND2; this interaction mediates the capture of both the N- and C-terminus of KCND2, thus preventing KCND2 N-type inactivation and modulates the channel gating kinetics. Interacts with KCND3; each KCNIP1 monomer interacts with two adjacent KCND3 subunits, through both the N-terminal inactivation ball of a KCND3 subunit and a C-terminal helix from the adjacent KCND3 subunit, clamping them together; this interaction stabilizes the tetrameric form and modulates the channel gating kinetics namely channel activation and inactivation kinetics and rate of recovery from inactivation. As to expression, expressed in brain. Found in a subpopulation of neurons widely distributed and enriched in Purkinje cells of the cerebellum and in the reticular thalamic and medial habenular nuclei.

Its subcellular location is the cell membrane. The protein localises to the cytoplasm. It is found in the cell projection. The protein resides in the dendrite. In terms of biological role, regulatory subunit of Kv4/D (Shal)-type voltage-gated rapidly inactivating A-type potassium channels. Regulates channel density, inactivation kinetics and rate of recovery from inactivation in a calcium-dependent and isoform-specific manner. Modulates KCND2/Kv4.2 currents. In vitro, modulates KCND1/Kv4.1 currents. Increases the presence of KCND2 at the cell surface. The polypeptide is A-type potassium channel modulatory protein KCNIP1 (Mus musculus (Mouse)).